A 287-amino-acid chain; its full sequence is Protease HtpX homolog (287 aa).

2 consecutive transmembrane segments (helical) span residues 5-25 and 28-48; these read IRTGLLMAALTALFVAIGYWI and GAGAAIALAFAAAGNFVAYWV. Zn(2+) is bound at residue His-131. The active site involves Glu-132. His-135 contributes to the Zn(2+) binding site. Helical transmembrane passes span 146–166 and 174–194; these read VTATLAGAIGMISNLAIFFGG and PFAGIAGLLLLLLAPLTATLV. Glu-203 contributes to the Zn(2+) binding site.

It belongs to the peptidase M48B family. Zn(2+) is required as a cofactor.

The protein localises to the cell inner membrane. The polypeptide is Protease HtpX homolog (Acidiphilium cryptum (strain JF-5)).